The chain runs to 200 residues: Dephospho-CoA kinase (200 aa).

The DPCK domain occupies Thr-4–Lys-200. Ala-12 to Thr-17 is an ATP binding site.

Belongs to the CoaE family.

The protein localises to the cytoplasm. The catalysed reaction is 3'-dephospho-CoA + ATP = ADP + CoA + H(+). It participates in cofactor biosynthesis; coenzyme A biosynthesis; CoA from (R)-pantothenate: step 5/5. In terms of biological role, catalyzes the phosphorylation of the 3'-hydroxyl group of dephosphocoenzyme A to form coenzyme A. The protein is Dephospho-CoA kinase of Listeria monocytogenes serovar 1/2a (strain ATCC BAA-679 / EGD-e).